Reading from the N-terminus, the 229-residue chain is Cytidylate kinase (229 aa).

Residue 10–18 (GYSSCGKST) coordinates ATP.

It belongs to the cytidylate kinase family. Type 1 subfamily.

The protein localises to the cytoplasm. It carries out the reaction CMP + ATP = CDP + ADP. It catalyses the reaction dCMP + ATP = dCDP + ADP. This Phocaeicola vulgatus (strain ATCC 8482 / DSM 1447 / JCM 5826 / CCUG 4940 / NBRC 14291 / NCTC 11154) (Bacteroides vulgatus) protein is Cytidylate kinase.